Reading from the N-terminus, the 592-residue chain is Arginine--tRNA ligase (592 aa).

The 'HIGH' region motif lies at 123–133 (PNTNKPLHLGH).

Belongs to the class-I aminoacyl-tRNA synthetase family. In terms of assembly, monomer.

The protein resides in the cytoplasm. It carries out the reaction tRNA(Arg) + L-arginine + ATP = L-arginyl-tRNA(Arg) + AMP + diphosphate. The sequence is that of Arginine--tRNA ligase from Flavobacterium johnsoniae (strain ATCC 17061 / DSM 2064 / JCM 8514 / BCRC 14874 / CCUG 350202 / NBRC 14942 / NCIMB 11054 / UW101) (Cytophaga johnsonae).